Consider the following 373-residue polypeptide: 4-hydroxy-3-methylbut-2-en-1-yl diphosphate synthase (flavodoxin) (373 aa).

Residues C268, C271, C303, and E310 each coordinate [4Fe-4S] cluster.

Belongs to the IspG family. [4Fe-4S] cluster is required as a cofactor.

The catalysed reaction is (2E)-4-hydroxy-3-methylbut-2-enyl diphosphate + oxidized [flavodoxin] + H2O + 2 H(+) = 2-C-methyl-D-erythritol 2,4-cyclic diphosphate + reduced [flavodoxin]. It functions in the pathway isoprenoid biosynthesis; isopentenyl diphosphate biosynthesis via DXP pathway; isopentenyl diphosphate from 1-deoxy-D-xylulose 5-phosphate: step 5/6. Converts 2C-methyl-D-erythritol 2,4-cyclodiphosphate (ME-2,4cPP) into 1-hydroxy-2-methyl-2-(E)-butenyl 4-diphosphate. This Exiguobacterium sp. (strain ATCC BAA-1283 / AT1b) protein is 4-hydroxy-3-methylbut-2-en-1-yl diphosphate synthase (flavodoxin).